Consider the following 886-residue polypeptide: Neurotrophin 1 (886 aa).

A signal peptide spans 1 to 29; sequence MKAGRAFGCLFWALLYCVLYLDLVSGNSA. Residues 30-498 constitute a propeptide that is removed on maturation; the sequence is DDELMDFDFA…FDDFSLSKKR (469 aa). N-linked (GlcNAc...) asparagine glycosylation is found at Asn267 and Asn317. A disordered region spans residues 321–340; the sequence is FQQPSSQEEEKMASSNGGQS. Asn353 is a glycosylation site (N-linked (GlcNAc...) asparagine). The disordered stretch occupies residues 369–436; that stretch reads RNSAEETEEP…HKPVVTPPNK (68 aa). One can recognise a Spaetzle domain in the interval 508–597; sequence MCQSVVRYAR…KVPTCCSCQV (90 aa). Intrachain disulfides connect Cys509–Cys564, Cys546–Cys593, and Cys553–Cys595. A glycan (N-linked (GlcNAc...) asparagine) is linked at Asn623. 2 disordered regions span residues 675–754 and 789–886; these read PGIS…QYHR and VSAP…QSIQ. A compositionally biased stretch (low complexity) spans 698–710; that stretch reads YKSSSSSSKKYYS. The span at 797–807 shows a compositional bias: pro residues; that stretch reads PAPPLPMPPMP. Composition is skewed to basic residues over residues 815–827 and 874–886; these read HQAHHQQPHHHLH and SRRHYHNRRQSIQ.

In terms of assembly, homodimer; disulfide-linked. Detected in the fan-shaped body which is a component of the locomotion center in the central nervous system (CNS) (at protein level). Expressed in the optic lobes and brain.

In terms of biological role, neurotrophin which may function as a ligand for the Toll-related receptors Toll-7 and Tollo. Binds to Toll-7 and probably acts as its ligand in promoting motor axon targeting and neuronal survival in the central nervous system (CNS). Involved in synaptic targeting of ISNb/d motorneurons and also some SNa motorneurons. In larvae, involved in the negative regulation of the tracheal immune response to bacterial infection perhaps by acting as a ligand for the Toll-related receptor Tollo. May be involved in the normal development of specific neurons at the neuromuscular junction. The chain is Neurotrophin 1 from Drosophila melanogaster (Fruit fly).